Consider the following 321-residue polypeptide: Mas-related G-protein coupled receptor member B4 (321 aa).

The Extracellular segment spans residues 1–33 (MGTTTLAWNINNTAENGSYTEMFSCITKFNTLN). N-linked (GlcNAc...) asparagine glycans are attached at residues N11 and N16. The helical transmembrane segment at 34-54 (FLTVIIAVVGLAGNGIVLWLL) threads the bilayer. Over 55–62 (AFHLHRNA) the chain is Cytoplasmic. A helical transmembrane segment spans residues 63-83 (FSVYVLNLAGADFLYLFTQVV). Over 84 to 97 (HSLECVLQLDNNSF) the chain is Extracellular. The N-linked (GlcNAc...) asparagine glycan is linked to N94. Residues 98–118 (YILLIVTMFAYLAGLCMIAAI) traverse the membrane as a helical segment. The Cytoplasmic portion of the chain corresponds to 119 to 146 (SAERCLSVMWPIWYHCQRPRHTSAIMCA). A helical membrane pass occupies residues 147–167 (LVWVSSLLLSLVVGLGCGFLF). Residues 168-172 (SYYDY) are Extracellular-facing. The helical transmembrane segment at 173 to 193 (YFCITLNFITAAFLIVLSVVL) threads the bilayer. The Cytoplasmic portion of the chain corresponds to 194–215 (SVSSLALLVKIVWGSHRIPVTR). A helical transmembrane segment spans residues 216–236 (FFVTIALTVVVFIYFGMPFGI). At 237-257 (CWFLLSRIMEFDSIFFNNVYE) the chain is on the extracellular side. Residues 258–278 (IIEFLSCVNSCANPIIYFLVG) traverse the membrane as a helical segment. Over 279–321 (SIRQHRLRWQSLKLLLQRAMQDTPEEESGERGPSQRSGELETV) the chain is Cytoplasmic. Positions 299-321 (QDTPEEESGERGPSQRSGELETV) are disordered.

Belongs to the G-protein coupled receptor 1 family. Mas subfamily.

Its subcellular location is the membrane. Orphan receptor. Probably involved in the function of nociceptive neurons. May regulate nociceptor function and/or development, including the sensation or modulation of pain. The polypeptide is Mas-related G-protein coupled receptor member B4 (Mrgprb4) (Mus musculus (Mouse)).